The sequence spans 287 residues: Phosphatidylserine decarboxylase proenzyme (287 aa).

Catalysis depends on charge relay system; for autoendoproteolytic cleavage activity residues Asp-90, His-147, and Ser-252. The active-site Schiff-base intermediate with substrate; via pyruvic acid; for decarboxylase activity is the Ser-252. Ser-252 bears the Pyruvic acid (Ser); by autocatalysis mark.

The protein belongs to the phosphatidylserine decarboxylase family. PSD-B subfamily. Prokaryotic type I sub-subfamily. Heterodimer of a large membrane-associated beta subunit and a small pyruvoyl-containing alpha subunit. It depends on pyruvate as a cofactor. In terms of processing, is synthesized initially as an inactive proenzyme. Formation of the active enzyme involves a self-maturation process in which the active site pyruvoyl group is generated from an internal serine residue via an autocatalytic post-translational modification. Two non-identical subunits are generated from the proenzyme in this reaction, and the pyruvate is formed at the N-terminus of the alpha chain, which is derived from the carboxyl end of the proenzyme. The autoendoproteolytic cleavage occurs by a canonical serine protease mechanism, in which the side chain hydroxyl group of the serine supplies its oxygen atom to form the C-terminus of the beta chain, while the remainder of the serine residue undergoes an oxidative deamination to produce ammonia and the pyruvoyl prosthetic group on the alpha chain. During this reaction, the Ser that is part of the protease active site of the proenzyme becomes the pyruvoyl prosthetic group, which constitutes an essential element of the active site of the mature decarboxylase.

The protein localises to the cell membrane. The enzyme catalyses a 1,2-diacyl-sn-glycero-3-phospho-L-serine + H(+) = a 1,2-diacyl-sn-glycero-3-phosphoethanolamine + CO2. Its pathway is phospholipid metabolism; phosphatidylethanolamine biosynthesis; phosphatidylethanolamine from CDP-diacylglycerol: step 2/2. Its function is as follows. Catalyzes the formation of phosphatidylethanolamine (PtdEtn) from phosphatidylserine (PtdSer). This Pseudomonas putida (strain GB-1) protein is Phosphatidylserine decarboxylase proenzyme.